Here is a 277-residue protein sequence, read N- to C-terminus: Tumor necrosis factor receptor superfamily member 4 (277 aa).

A signal peptide spans 1–28 (MCVGARRLGRGPCAALLLLGLGLSTVTG). The Extracellular portion of the chain corresponds to 29–214 (LHCVGDTYPS…RPVEVPGGRA (186 aa)). TNFR-Cys repeat units follow at residues 30-65 (HCVG…TVCR) and 66-107 (PCGP…DTVC). 8 disulfides stabilise this stretch: Cys31–Cys42, Cys43–Cys56, Cys46–Cys64, Cys67–Cys81, Cys84–Cys99, Cys87–Cys107, Cys109–Cys125, and Cys128–Cys141. A TNFR-Cys 3; truncated repeat occupies 108–126 (RCRAGTQPLDSYKPGVDCA). One copy of the TNFR-Cys 4 repeat lies at 127 to 167 (PCPPGHFSPGDNQACKPWTNCTLAGKHTLQPASNSSDAICE). Asn146 and Asn160 each carry an N-linked (GlcNAc...) asparagine glycan. The cysteines at positions 147 and 166 are disulfide-linked. A disordered region spans residues 158–209 (ASNSSDAICEDRDPPATQPQETQGPPARPITVQPTEAWPRTSQGPSTRPVEV). The helical transmembrane segment at 215 to 235 (VAAILGLGLVLGLLGPLAILL) threads the bilayer. Residues 236 to 277 (ALYLLRRDQRLPPDAHKPPGGGSFRTPIQEEQADAHSTLAKI) are Cytoplasmic-facing. The interval 248–277 (PDAHKPPGGGSFRTPIQEEQADAHSTLAKI) is disordered.

As to quaternary structure, interacts with TRAF2, TRAF3 and TRAF5. In terms of assembly, (Microbial infection) Interacts with Human herpesvirus 6B/HHV-6B gQ1:gQ2 proteins.

The protein resides in the membrane. Receptor for TNFSF4/OX40L/GP34. Is a costimulatory molecule implicated in long-term T-cell immunity. Functionally, (Microbial infection) Acts as a receptor for human herpesvirus 6B/HHV-6B. This is Tumor necrosis factor receptor superfamily member 4 (TNFRSF4) from Homo sapiens (Human).